The chain runs to 381 residues: Cytochrome b (381 aa).

A run of 4 helical transmembrane segments spans residues 33 to 53 (FGSL…FLAM), 77 to 98 (WLIR…FLHV), 113 to 133 (WNIG…GYVL), and 178 to 198 (FFAF…VHLL). H83 and H97 together coordinate heme b. Positions 182 and 196 each coordinate heme b. H201 is an a ubiquinone binding site. Helical transmembrane passes span 226-246 (IKDA…ALFS), 288-308 (LGGV…PLLH), 320-340 (VSQT…WIGG), and 347-367 (FIII…VLMP).

This sequence belongs to the cytochrome b family. In terms of assembly, the cytochrome bc1 complex contains 11 subunits: 3 respiratory subunits (MT-CYB, CYC1 and UQCRFS1), 2 core proteins (UQCRC1 and UQCRC2) and 6 low-molecular weight proteins (UQCRH/QCR6, UQCRB/QCR7, UQCRQ/QCR8, UQCR10/QCR9, UQCR11/QCR10 and a cleavage product of UQCRFS1). This cytochrome bc1 complex then forms a dimer. Requires heme b as cofactor.

It is found in the mitochondrion inner membrane. In terms of biological role, component of the ubiquinol-cytochrome c reductase complex (complex III or cytochrome b-c1 complex) that is part of the mitochondrial respiratory chain. The b-c1 complex mediates electron transfer from ubiquinol to cytochrome c. Contributes to the generation of a proton gradient across the mitochondrial membrane that is then used for ATP synthesis. The protein is Cytochrome b (MT-CYB) of Ningaui yvonnae (Southern ningaui).